We begin with the raw amino-acid sequence, 313 residues long: 2-phosphoglycerate kinase (313 aa).

One can recognise an ATP-cone domain in the interval 8 to 95; the sequence is SRILVKDKEY…LWRRVLKKHS (88 aa).

This sequence belongs to the 2-phosphoglycerate kinase family. Requires a divalent metal cation as cofactor.

The enzyme catalyses (2R)-2-phosphoglycerate + ATP = (2R)-2,3-bisphosphoglycerate + ADP + H(+). It functions in the pathway thermoadapter biosynthesis; cyclic 2,3-diphosphoglycerate biosynthesis; cyclic 2,3-diphosphoglycerate from 2-phospho-D-glycerate: step 1/2. Its function is as follows. Catalyzes the phosphorylation of 2-phosphoglycerate to 2,3-diphosphoglycerate. Involved in the biosynthesis of cyclic 2,3-bisphosphoglycerate, a thermoprotectant. This is 2-phosphoglycerate kinase from Methanococcus maripaludis (strain C5 / ATCC BAA-1333).